The sequence spans 152 residues: Superoxide dismutase [Cu-Zn] (152 aa).

Cu cation-binding residues include His45, His47, and His62. Cysteines 56 and 145 form a disulfide. Zn(2+)-binding residues include His62, His70, His79, and Asp82. His119 contacts Cu cation.

It belongs to the Cu-Zn superoxide dismutase family. As to quaternary structure, homodimer. The cofactor is Cu cation. Zn(2+) serves as cofactor.

Its subcellular location is the cytoplasm. The catalysed reaction is 2 superoxide + 2 H(+) = H2O2 + O2. In terms of biological role, destroys radicals which are normally produced within the cells and which are toxic to biological systems. The sequence is that of Superoxide dismutase [Cu-Zn] (SODCC) from Pisum sativum (Garden pea).